The primary structure comprises 157 residues: Crossover junction endodeoxyribonuclease RuvC (157 aa).

Active-site residues include Asp7, Glu67, and Asp139. Residues Asp7, Glu67, and Asp139 each coordinate Mg(2+).

It belongs to the RuvC family. As to quaternary structure, homodimer which binds Holliday junction (HJ) DNA. The HJ becomes 2-fold symmetrical on binding to RuvC with unstacked arms; it has a different conformation from HJ DNA in complex with RuvA. In the full resolvosome a probable DNA-RuvA(4)-RuvB(12)-RuvC(2) complex forms which resolves the HJ. Mg(2+) is required as a cofactor.

The protein localises to the cytoplasm. The enzyme catalyses Endonucleolytic cleavage at a junction such as a reciprocal single-stranded crossover between two homologous DNA duplexes (Holliday junction).. Its function is as follows. The RuvA-RuvB-RuvC complex processes Holliday junction (HJ) DNA during genetic recombination and DNA repair. Endonuclease that resolves HJ intermediates. Cleaves cruciform DNA by making single-stranded nicks across the HJ at symmetrical positions within the homologous arms, yielding a 5'-phosphate and a 3'-hydroxyl group; requires a central core of homology in the junction. The consensus cleavage sequence is 5'-(A/T)TT(C/G)-3'. Cleavage occurs on the 3'-side of the TT dinucleotide at the point of strand exchange. HJ branch migration catalyzed by RuvA-RuvB allows RuvC to scan DNA until it finds its consensus sequence, where it cleaves and resolves the cruciform DNA. In Prochlorococcus marinus (strain MIT 9312), this protein is Crossover junction endodeoxyribonuclease RuvC.